The primary structure comprises 208 residues: Small ribosomal subunit protein uS4 (208 aa).

A disordered region spans residues 31 to 50; that stretch reads SALDKRAYGPGQHGQRRTKT. The S4 RNA-binding domain occupies 98-161; it reads RRLDNVVYRM…KSNPQVVRAM (64 aa).

This sequence belongs to the universal ribosomal protein uS4 family. As to quaternary structure, part of the 30S ribosomal subunit. Contacts protein S5. The interaction surface between S4 and S5 is involved in control of translational fidelity.

One of the primary rRNA binding proteins, it binds directly to 16S rRNA where it nucleates assembly of the body of the 30S subunit. In terms of biological role, with S5 and S12 plays an important role in translational accuracy. The protein is Small ribosomal subunit protein uS4 of Helicobacter pylori (strain J99 / ATCC 700824) (Campylobacter pylori J99).